An 80-amino-acid polypeptide reads, in one-letter code: Large ribosomal subunit protein bL31 (80 aa).

The Zn(2+) site is built by Cys16, Cys18, Cys36, and Cys39.

It belongs to the bacterial ribosomal protein bL31 family. Type A subfamily. In terms of assembly, part of the 50S ribosomal subunit. Zn(2+) serves as cofactor.

In terms of biological role, binds the 23S rRNA. This Methylacidiphilum infernorum (isolate V4) (Methylokorus infernorum (strain V4)) protein is Large ribosomal subunit protein bL31.